A 206-amino-acid chain; its full sequence is Pyridoxine/pyridoxamine 5'-phosphate oxidase (206 aa).

FMN contacts are provided by residues 53-58 (RMVLLK), 68-69 (YT), Lys-75, and Gln-97. Residue Lys-58 participates in substrate binding. Residues Tyr-115, Arg-119, and Ser-123 each contribute to the substrate site. FMN is bound by residues 132–133 (QS) and Trp-177. 183–185 (RLH) contributes to the substrate binding site. Arg-187 contacts FMN.

Belongs to the pyridoxamine 5'-phosphate oxidase family. Homodimer. FMN is required as a cofactor.

The enzyme catalyses pyridoxamine 5'-phosphate + O2 + H2O = pyridoxal 5'-phosphate + H2O2 + NH4(+). It catalyses the reaction pyridoxine 5'-phosphate + O2 = pyridoxal 5'-phosphate + H2O2. It participates in cofactor metabolism; pyridoxal 5'-phosphate salvage; pyridoxal 5'-phosphate from pyridoxamine 5'-phosphate: step 1/1. It functions in the pathway cofactor metabolism; pyridoxal 5'-phosphate salvage; pyridoxal 5'-phosphate from pyridoxine 5'-phosphate: step 1/1. Its function is as follows. Catalyzes the oxidation of either pyridoxine 5'-phosphate (PNP) or pyridoxamine 5'-phosphate (PMP) into pyridoxal 5'-phosphate (PLP). The polypeptide is Pyridoxine/pyridoxamine 5'-phosphate oxidase (Agrobacterium fabrum (strain C58 / ATCC 33970) (Agrobacterium tumefaciens (strain C58))).